The sequence spans 337 residues: MANSC domain-containing protein 4 (337 aa).

A signal peptide spans 1–18 (MRAVELLLLLGLASMVHG). The Extracellular portion of the chain corresponds to 19–278 (LCSPTVFYRD…SSENEEPWDG (260 aa)). The MANSC domain occupies 33 to 113 (RFPGMLLDLE…LEPGASAILY (81 aa)). N-linked (GlcNAc...) asparagine glycosylation is found at N114, N227, and N251. Polar residues-rich tracts occupy residues 216–230 (SPST…NKTI) and 239–260 (TRVS…VNKT). A disordered region spans residues 216 to 277 (SPSTDFTHSP…HSSENEEPWD (62 aa)). The helical transmembrane segment at 279–299 (APASAGVWLACVTLGAAVISL) threads the bilayer. The Cytoplasmic segment spans residues 300–337 (CCRVVLGTSRCCGKRQGWSHMGQRSASGCRRNTLKENS). Positions 314 to 337 (RQGWSHMGQRSASGCRRNTLKENS) are disordered.

The protein localises to the membrane. The protein is MANSC domain-containing protein 4 (Mansc4) of Mus musculus (Mouse).